A 264-amino-acid polypeptide reads, in one-letter code: MAVGKNKRLTKGGKKGAKKKVVDPFSKKDWYDVKAPAMFNIRNIGKTLVTRTQGTKIASDGLKGRVFEVSLADLQNDEVAFRKFKLITEDVQGKNCLTNFHGMDLTRDKMCSMVKKWQTMIEAHVDVKTTDGYLLRLFCVGFTKKRNNQIRKTSYAQHQQVRQIRKKMMEIMTREVQTNDLKEVVNKLIPDSIGKDIEKACQSIYPLHDVFVRKVKMLKKPKFELGKLMELHGEGGSSGKTTGDETGAKVERADGYEPPVQESV.

Lys34 carries the post-translational modification N6-acetyllysine; alternate. Lys34 participates in a covalent cross-link: Glycyl lysine isopeptide (Lys-Gly) (interchain with G-Cter in SUMO2); alternate. Lys56 is subject to N6-acetyllysine. Tyr155 carries the ADP-ribosyltyrosine modification. The segment at 232–264 (HGEGGSSGKTTGDETGAKVERADGYEPPVQESV) is disordered. Residue Ser237 is modified to Phosphoserine. A compositionally biased stretch (basic and acidic residues) spans 242–255 (TGDETGAKVERADG). Lys249 carries the N6-acetyllysine; alternate modification. Residue Lys249 forms a Glycyl lysine isopeptide (Lys-Gly) (interchain with G-Cter in SUMO2); alternate linkage. Tyr256 carries the phosphotyrosine modification. A Phosphoserine modification is found at Ser263.

Belongs to the eukaryotic ribosomal protein eS1 family. Component of the small ribosomal subunit. Mature ribosomes consist of a small (40S) and a large (60S) subunit. The 40S subunit contains about 33 different proteins and 1 molecule of RNA (18S). The 60S subunit contains about 49 different proteins and 3 molecules of RNA (28S, 5.8S and 5S). Identified in a IGF2BP1-dependent mRNP granule complex containing untranslated mRNAs. Binds with high affinity to IPO4. Interacts with DDIT3. Part of the small subunit (SSU) processome, composed of more than 70 proteins and the RNA chaperone small nucleolar RNA (snoRNA) U3. Post-translationally, the protein designated S3b has the same amino acid sequence as S3a except that it lacks the C-terminal 12 residues. It is probable that S3a is converted by proteolysis, either physiologically or fortuitously, to S3b. ADP-ribosylated at Tyr-155 by PARP1 in presence of HPF1.

It localises to the cytoplasm. The protein localises to the nucleus. The protein resides in the nucleolus. In terms of biological role, component of the small ribosomal subunit. The ribosome is a large ribonucleoprotein complex responsible for the synthesis of proteins in the cell. Part of the small subunit (SSU) processome, first precursor of the small eukaryotic ribosomal subunit. During the assembly of the SSU processome in the nucleolus, many ribosome biogenesis factors, an RNA chaperone and ribosomal proteins associate with the nascent pre-rRNA and work in concert to generate RNA folding, modifications, rearrangements and cleavage as well as targeted degradation of pre-ribosomal RNA by the RNA exosome. May play a role during erythropoiesis through regulation of transcription factor DDIT3. This chain is Small ribosomal subunit protein eS1 (Rps3a), found in Rattus norvegicus (Rat).